The sequence spans 366 residues: GTPase Obg (366 aa).

The region spanning 1-159 (MKFLDEAKVY…KTIWLRLKLI (159 aa)) is the Obg domain. An OBG-type G domain is found at 160-327 (ADAGLVGLPN…VLRALRDVIV (168 aa)). GTP-binding positions include 166–173 (GLPNAGKS), 191–195 (FTTLH), 212–215 (DIPG), 279–282 (SQID), and 308–310 (SAI). The Mg(2+) site is built by Ser173 and Thr193. Residues 333–366 (DDETISQRPKKHRHKLEDRPQHENGPEESEEGEE) are disordered. Basic and acidic residues predominate over residues 347 to 357 (KLEDRPQHENG).

It belongs to the TRAFAC class OBG-HflX-like GTPase superfamily. OBG GTPase family. As to quaternary structure, monomer. It depends on Mg(2+) as a cofactor.

It localises to the cytoplasm. An essential GTPase which binds GTP, GDP and possibly (p)ppGpp with moderate affinity, with high nucleotide exchange rates and a fairly low GTP hydrolysis rate. Plays a role in control of the cell cycle, stress response, ribosome biogenesis and in those bacteria that undergo differentiation, in morphogenesis control. This Allorhizobium ampelinum (strain ATCC BAA-846 / DSM 112012 / S4) (Agrobacterium vitis (strain S4)) protein is GTPase Obg.